Reading from the N-terminus, the 389-residue chain is MSSSIPRVYSLGNSAMTYLLALRIAQLPSQPKVPSVVLLLNDQKKLNRFLNNDSKIIVKSSNNNKETYHRQFMASCVPPILSNGEIAPIENLIVSDPSSKFITAQLSKYNKSLRPETNILFLNPSLNLLEHLHRYRWRFDEARPNLFMGFTTPVDVGTIHQEFQLSLKVKGRIQFHIAKIDGFPRMSSTGKSASLSLRGDRQKNEKENNAFYKLFREISRLRSGIGSDLVSFDLHVHGFQDLFFTELEKLILESCTEPLLAVYDCVYKKELLKIPGAQDIIKKLISEQLSIIDRSYPSLNTNPNYSVIFDKERIFSLVMRDLEVNGHKRAKLAQSLNQLNQTNINELNGFFVSLGKYKKCNCKWNDILLTLIKGKQFITKQKALDYHYL.

The protein localises to the mitochondrion. Its function is as follows. Translational activator of cytochrome b. The cytochrome b (coB) leader RNA may represent the target sequence for CBS1 and/ or CBS2. The polypeptide is Cytochrome B translational activator CBS2 (CBS2) (Saccharomyces cerevisiae (strain ATCC 204508 / S288c) (Baker's yeast)).